Reading from the N-terminus, the 559-residue chain is Poly [ADP-ribose] polymerase 2 (559 aa).

The tract at residues 1–58 (MAPRRQRSGSGRRVLNEAKKVDNGNKATEDDSPPGKKMRTCQRKGPMAGGKDADRTKD) is disordered. Residues 1–83 (MAPRRQRSGS…VDPECAAKLG (83 aa)) are N-terminal region (NTR). The segment covering 14–29 (VLNEAKKVDNGNKATE) has biased composition (basic and acidic residues). Short sequence motifs (nuclear localization signal) lie at residues 19-20 (KK) and 33-39 (PPGKKMR). An N6-(ADP-ribosyl)lysine; alternate mark is found at K36 and K37. K36 and K37 each carry N6-acetyllysine; alternate. The WGR domain occupies 84-181 (KAHVYCEGDD…ENFEKVPGKY (98 aa)). Residues 207–324 (ESQLDLRVQE…DIEIALKLVK (118 aa)) enclose the PARP alpha-helical domain. Position 208 is a phosphoserine (S208). The region spanning 332 to 559 (HPLDQHYRNL…KIQFNFLQLW (228 aa)) is the PARP catalytic domain. Residues 404-406 (HGS), G413, R420, and S446 each bind NAD(+). E534 serves as the catalytic For poly [ADP-ribose] polymerase activity.

Belongs to the ARTD/PARP family. In terms of assembly, component of a base excision repair (BER) complex, containing at least XRCC1, PARP1, POLB and LRIG3. Homo- and heterodimer with PARP1. Interacts (via the PARP catalytic domain) with HPF1. Interacts with core nucleosomes. Post-translationally, auto poly-ADP-ribosylated on serine residues, leading to dissociation of the PARP2-HPF1 complex from chromatin. Poly-ADP-ribosylated by PARP1. In terms of processing, acetylation reduces DNA binding and enzymatic activity. Proteolytically cleaved by caspase-8 (CASP8) in response to apoptosis, leading to its inactivation. As to expression, widely expressed; the highest levels were in testis followed by ovary. Expression is correlated with proliferation, with higher levels occurring during early fetal development and organogenesis and in the highly proliferative cell compartments of adult.

It localises to the nucleus. The protein localises to the chromosome. It catalyses the reaction NAD(+) + (ADP-D-ribosyl)n-acceptor = nicotinamide + (ADP-D-ribosyl)n+1-acceptor + H(+).. It carries out the reaction L-seryl-[protein] + NAD(+) = O-(ADP-D-ribosyl)-L-seryl-[protein] + nicotinamide + H(+). The catalysed reaction is L-aspartyl-[protein] + NAD(+) = 4-O-(ADP-D-ribosyl)-L-aspartyl-[protein] + nicotinamide. The enzyme catalyses L-glutamyl-[protein] + NAD(+) = 5-O-(ADP-D-ribosyl)-L-glutamyl-[protein] + nicotinamide. Its activity is regulated as follows. ADP-ribosyltransferase activity is regulated via an allosteric activation mechanism. In absence of activation signal, PARP2 is autoinhibited by the PARP alpha-helical domain (also named HD region), which prevents effective NAD(+)-binding. Activity is highly stimulated by signals, which unfold the PARP alpha-helical domain, relieving autoinhibition. Poly-ADP-ribosyltransferase activity is tightly regulated and PARP2 is removed from damaged chromatin following initial poly-ADP-ribosylation of chromatin to avoid prolonged residence (trapping) that has cytotoxic consequences. CHD1L promotes PARP2 removal from chromatin. Functionally, poly-ADP-ribosyltransferase that mediates poly-ADP-ribosylation of proteins and plays a key role in DNA repair. Mediates glutamate, aspartate or serine ADP-ribosylation of proteins: the ADP-D-ribosyl group of NAD(+) is transferred to the acceptor carboxyl group of target residues and further ADP-ribosyl groups are transferred to the 2'-position of the terminal adenosine moiety, building up a polymer with an average chain length of 20-30 units. Serine ADP-ribosylation of proteins constitutes the primary form of ADP-ribosylation of proteins in response to DNA damage. Mediates glutamate and aspartate ADP-ribosylation of target proteins in absence of HPF1. Following interaction with HPF1, catalyzes serine ADP-ribosylation of target proteins; HPF1 conferring serine specificity by completing the PARP2 active site. PARP2 initiates the repair of double-strand DNA breaks: recognizes and binds DNA breaks within chromatin and recruits HPF1, licensing serine ADP-ribosylation of target proteins, such as histones, thereby promoting decompaction of chromatin and the recruitment of repair factors leading to the reparation of DNA strand breaks. HPF1 initiates serine ADP-ribosylation but restricts the polymerase activity of PARP2 in order to limit the length of poly-ADP-ribose chains. Specifically mediates formation of branched poly-ADP-ribosylation. Branched poly-ADP-ribose chains are specifically recognized by some factors, such as APLF. In addition to proteins, also able to ADP-ribosylate DNA: preferentially acts on 5'-terminal phosphates at DNA strand breaks termini in nicked duplex. This chain is Poly [ADP-ribose] polymerase 2 (Parp2), found in Mus musculus (Mouse).